Consider the following 71-residue polypeptide: Small ribosomal subunit protein bS18 (71 aa).

It belongs to the bacterial ribosomal protein bS18 family. As to quaternary structure, part of the 30S ribosomal subunit. Forms a tight heterodimer with protein bS6.

Functionally, binds as a heterodimer with protein bS6 to the central domain of the 16S rRNA, where it helps stabilize the platform of the 30S subunit. In Acaryochloris marina (strain MBIC 11017), this protein is Small ribosomal subunit protein bS18.